Consider the following 124-residue polypeptide: MANVFDNSSYRDMLKMVFVIRDDLKMTKGEIVSQCCHGAISAYEKSKKYSPDYLKRWLKNGQVKETVKVDNENEMMDIRENATAIGVNYYIVQNDKRQKCNTVLVIGPAPNYMFESLTRSLKPL.

The protein belongs to the PTH2 family.

It catalyses the reaction an N-acyl-L-alpha-aminoacyl-tRNA + H2O = an N-acyl-L-amino acid + a tRNA + H(+). The protein is Putative peptidyl-tRNA hydrolase of Fowlpox virus (strain NVSL) (FPV).